A 106-amino-acid chain; its full sequence is MSKLHIKKGDTVMVISGEDKGHSGRVLEVLVKEQRAIVEGLNMIKKHAKPSAKNPQGGIISKEAPIHISNLNVVDPKTGKATRIGRRLNENGKLVRYAKKSGEEIK.

Belongs to the universal ribosomal protein uL24 family. Part of the 50S ribosomal subunit.

Its function is as follows. One of two assembly initiator proteins, it binds directly to the 5'-end of the 23S rRNA, where it nucleates assembly of the 50S subunit. One of the proteins that surrounds the polypeptide exit tunnel on the outside of the subunit. The polypeptide is Large ribosomal subunit protein uL24 (Porphyromonas gingivalis (strain ATCC 33277 / DSM 20709 / CIP 103683 / JCM 12257 / NCTC 11834 / 2561)).